The primary structure comprises 313 residues: N-acetyl-gamma-glutamyl-phosphate reductase (313 aa).

The active site involves Cys-117.

This sequence belongs to the NAGSA dehydrogenase family. Type 2 subfamily.

It is found in the cytoplasm. It catalyses the reaction N-acetyl-L-glutamate 5-semialdehyde + phosphate + NADP(+) = N-acetyl-L-glutamyl 5-phosphate + NADPH + H(+). It functions in the pathway amino-acid biosynthesis; L-arginine biosynthesis; N(2)-acetyl-L-ornithine from L-glutamate: step 3/4. Functionally, catalyzes the NADPH-dependent reduction of N-acetyl-5-glutamyl phosphate to yield N-acetyl-L-glutamate 5-semialdehyde. The protein is N-acetyl-gamma-glutamyl-phosphate reductase of Burkholderia orbicola (strain MC0-3).